The chain runs to 444 residues: Trigger factor (444 aa).

The PPIase FKBP-type domain maps to glycine 185–phenylalanine 270.

This sequence belongs to the FKBP-type PPIase family. Tig subfamily.

The protein localises to the cytoplasm. It carries out the reaction [protein]-peptidylproline (omega=180) = [protein]-peptidylproline (omega=0). In terms of biological role, involved in protein export. Acts as a chaperone by maintaining the newly synthesized protein in an open conformation. Functions as a peptidyl-prolyl cis-trans isomerase. The protein is Trigger factor of Wolbachia pipientis wMel.